Reading from the N-terminus, the 359-residue chain is Photosystem II protein D1 3 (359 aa).

3 helical membrane passes run 29-46 (YVGW…AATI), 118-133 (HFLI…EWEL), and 142-156 (WICV…AASA). A chlorophyll a-binding site is contributed by H118. Position 126 (Y126) interacts with pheophytin a. Residues D170 and E189 each contribute to the [CaMn4O5] cluster site. A helical transmembrane segment spans residues 197 to 218 (FHMLGVAGVFGGSLFSAMHGSL). Chlorophyll a is bound at residue H198. Residues H215 and 264 to 265 (SF) each bind a quinone. Residue H215 participates in Fe cation binding. Residue H272 participates in Fe cation binding. Residues 274–288 (FLAAWPVVGIWFTAL) form a helical membrane-spanning segment. The [CaMn4O5] cluster site is built by H332, E333, D342, and A344. Positions 345–359 (AAESTPVALQVPAIG) are excised as a propeptide.

It belongs to the reaction center PufL/M/PsbA/D family. In terms of assembly, PSII is composed of 1 copy each of membrane proteins PsbA, PsbB, PsbC, PsbD, PsbE, PsbF, PsbH, PsbI, PsbJ, PsbK, PsbL, PsbM, PsbT, PsbX, PsbY, PsbZ, Psb30/Ycf12, peripheral proteins PsbO, CyanoQ (PsbQ), PsbU, PsbV and a large number of cofactors. It forms dimeric complexes. Requires The D1/D2 heterodimer binds P680, chlorophylls that are the primary electron donor of PSII, and subsequent electron acceptors. It shares a non-heme iron and each subunit binds pheophytin, quinone, additional chlorophylls, carotenoids and lipids. D1 provides most of the ligands for the Mn4-Ca-O5 cluster of the oxygen-evolving complex (OEC). There is also a Cl(-1) ion associated with D1 and D2, which is required for oxygen evolution. The PSII complex binds additional chlorophylls, carotenoids and specific lipids. as cofactor. Post-translationally, tyr-161 forms a radical intermediate that is referred to as redox-active TyrZ, YZ or Y-Z. In terms of processing, C-terminally processed by CtpA; processing is essential to allow assembly of the oxygen-evolving complex and thus photosynthetic growth.

The protein resides in the cellular thylakoid membrane. It carries out the reaction 2 a plastoquinone + 4 hnu + 2 H2O = 2 a plastoquinol + O2. Photosystem II (PSII) is a light-driven water:plastoquinone oxidoreductase that uses light energy to abstract electrons from H(2)O, generating O(2) and a proton gradient subsequently used for ATP formation. It consists of a core antenna complex that captures photons, and an electron transfer chain that converts photonic excitation into a charge separation. The D1/D2 (PsbA/PsbD) reaction center heterodimer binds P680, the primary electron donor of PSII as well as several subsequent electron acceptors. This Parasynechococcus marenigrum (strain WH8102) protein is Photosystem II protein D1 3.